The primary structure comprises 164 residues: SsrA-binding protein (164 aa).

The protein belongs to the SmpB family.

It localises to the cytoplasm. In terms of biological role, required for rescue of stalled ribosomes mediated by trans-translation. Binds to transfer-messenger RNA (tmRNA), required for stable association of tmRNA with ribosomes. tmRNA and SmpB together mimic tRNA shape, replacing the anticodon stem-loop with SmpB. tmRNA is encoded by the ssrA gene; the 2 termini fold to resemble tRNA(Ala) and it encodes a 'tag peptide', a short internal open reading frame. During trans-translation Ala-aminoacylated tmRNA acts like a tRNA, entering the A-site of stalled ribosomes, displacing the stalled mRNA. The ribosome then switches to translate the ORF on the tmRNA; the nascent peptide is terminated with the 'tag peptide' encoded by the tmRNA and targeted for degradation. The ribosome is freed to recommence translation, which seems to be the essential function of trans-translation. This is SsrA-binding protein from Corynebacterium glutamicum (strain R).